The chain runs to 117 residues: MRPAEDIIKRPYITEKSNAEIANGKYTFIVDAKATKTEIRQAVEKLFQVKVLKVNTVNYKGKRKRLGVHEGFRPDWKKAIVKIDTEPKPVTYLTEGGKTATTTKKYKTSIEEFGAAQ.

It belongs to the universal ribosomal protein uL23 family. Part of the 50S ribosomal subunit. Contacts protein L29, and trigger factor when it is bound to the ribosome.

In terms of biological role, one of the early assembly proteins it binds 23S rRNA. One of the proteins that surrounds the polypeptide exit tunnel on the outside of the ribosome. Forms the main docking site for trigger factor binding to the ribosome. This Acetivibrio thermocellus (strain ATCC 27405 / DSM 1237 / JCM 9322 / NBRC 103400 / NCIMB 10682 / NRRL B-4536 / VPI 7372) (Clostridium thermocellum) protein is Large ribosomal subunit protein uL23.